The following is a 98-amino-acid chain: Co-chaperonin GroES (98 aa).

Belongs to the GroES chaperonin family. Heptamer of 7 subunits arranged in a ring. Interacts with the chaperonin GroEL.

Its subcellular location is the cytoplasm. Functionally, together with the chaperonin GroEL, plays an essential role in assisting protein folding. The GroEL-GroES system forms a nano-cage that allows encapsulation of the non-native substrate proteins and provides a physical environment optimized to promote and accelerate protein folding. GroES binds to the apical surface of the GroEL ring, thereby capping the opening of the GroEL channel. The protein is Co-chaperonin GroES of Kineococcus radiotolerans (strain ATCC BAA-149 / DSM 14245 / SRS30216).